Consider the following 394-residue polypeptide: Exodeoxyribonuclease 7 large subunit (394 aa).

The protein belongs to the XseA family. Heterooligomer composed of large and small subunits.

The protein resides in the cytoplasm. It carries out the reaction Exonucleolytic cleavage in either 5'- to 3'- or 3'- to 5'-direction to yield nucleoside 5'-phosphates.. Its function is as follows. Bidirectionally degrades single-stranded DNA into large acid-insoluble oligonucleotides, which are then degraded further into small acid-soluble oligonucleotides. The chain is Exodeoxyribonuclease 7 large subunit from Thermotoga petrophila (strain ATCC BAA-488 / DSM 13995 / JCM 10881 / RKU-1).